Consider the following 802-residue polypeptide: MSFNHQEIEKKWQGHWEENKTFRTPDETEKPKFYALDMFPYPSGAGLHVGHPEGYTATDILSRMKRMQGYNVLHPMGWDAFGLPAEQYALDTGNSPAEFTELNINTFRNQIKALGFSYDWDREVNTTDPTYYKWTQWIFLKLFEKGLAYVDEVPVNWCPALGTVLANEEIIDGKSERGGHPVERRPMRQWMLKITAYGDRLLEDLDELNWPESLKDMQRNWIGRSEGAEVHFNIDGTDEKFTVFTTRPDTLFGASYCVLAPEHALVANITIPEQKEAVEAYINSVKMKSDLERTELAKEKTGVFTGAYAVNPVNGEKLPIWIADYVLATYGTGAVMAVPAHDERDYEFASTFNLPMKEVVKGGDISKEAYTGDGAHVNSAFLDGLNKEKAIVKMIEWLEVTSAGNQKVTYRLRDWLFSRQRYWGEPIPVIHWEDGTMTAVKEEELPLVLPKTENIRPSGTGESPLANIEEWVNVVDPETGKKGRRETNTMPQWAGSCWYYLRYIDPNNSEALVDPEKVKQWLPVDIYIGGAEHAVLHLLYARFWHKVLYDIGVVPTKEPFQQLFNQGMILGENNEKMSKSKGNVVNPDDIVASHGADTLRLYEMFMGPLDASIAWSENGLDGARRFLDRVWRLFIQENGELSEKITDAPNKDLEKAYHQTVKKVTEDYAELRFNTAISQMMVFINDAYKAETLPKEYVEGFVKMIAPVAPHIGEELWNKLGYSETITYASWPTFDESKLVEDEVEIVVQIMGKVRTKLTMSKDASKEEMEQLALEAIKEQIEGKTVRKVIVVPGKLVNVVAN.

A 'HIGH' region motif is present at residues 40 to 51; that stretch reads PYPSGAGLHVGH. The 'KMSKS' region motif lies at 576 to 580; it reads KMSKS. Residue Lys579 participates in ATP binding.

The protein belongs to the class-I aminoacyl-tRNA synthetase family.

The protein localises to the cytoplasm. The enzyme catalyses tRNA(Leu) + L-leucine + ATP = L-leucyl-tRNA(Leu) + AMP + diphosphate. The protein is Leucine--tRNA ligase of Bacillus mycoides (strain KBAB4) (Bacillus weihenstephanensis).